The chain runs to 227 residues: NADH-quinone oxidoreductase subunit C (227 aa).

It belongs to the complex I 30 kDa subunit family. As to quaternary structure, NDH-1 is composed of 14 different subunits. Subunits NuoB, C, D, E, F, and G constitute the peripheral sector of the complex.

Its subcellular location is the cell inner membrane. The catalysed reaction is a quinone + NADH + 5 H(+)(in) = a quinol + NAD(+) + 4 H(+)(out). Functionally, NDH-1 shuttles electrons from NADH, via FMN and iron-sulfur (Fe-S) centers, to quinones in the respiratory chain. The immediate electron acceptor for the enzyme in this species is believed to be ubiquinone. Couples the redox reaction to proton translocation (for every two electrons transferred, four hydrogen ions are translocated across the cytoplasmic membrane), and thus conserves the redox energy in a proton gradient. The sequence is that of NADH-quinone oxidoreductase subunit C from Coxiella burnetii (strain Dugway 5J108-111).